The primary structure comprises 131 residues: Small ribosomal subunit protein eS6 (131 aa).

It belongs to the eukaryotic ribosomal protein eS6 family.

This Halobacterium salinarum (strain ATCC 29341 / DSM 671 / R1) protein is Small ribosomal subunit protein eS6.